We begin with the raw amino-acid sequence, 328 residues long: UPF0421 protein SAR1980 (328 aa).

4 consecutive transmembrane segments (helical) span residues 19-39 (IAIF…IYAI), 61-81 (LPAT…FGDQ), 108-128 (VAVL…IFNF), and 132-152 (TLTA…VFPP).

This sequence belongs to the UPF0421 family.

It localises to the cell membrane. The sequence is that of UPF0421 protein SAR1980 from Staphylococcus aureus (strain MRSA252).